A 329-amino-acid polypeptide reads, in one-letter code: Serpentine receptor class alpha-4 (329 aa).

The next 6 helical transmembrane spans lie at 25-45 (IIVLIPVFITFIFTYYAIKVV), 103-123 (LYLEVFVSGVAGMVYGQTGLL), 144-164 (GLAISVSVLCLSFITSRLIIW), 188-208 (YFQSICTLLALFNLVTSILIW), 238-258 (ICFLTFVQFIFFLVYSLGFFI), and 273-293 (LVAVWLYTPPYIAASFPILIF).

The protein belongs to the nematode receptor-like protein sra family.

The protein resides in the membrane. The protein is Serpentine receptor class alpha-4 (sra-4) of Caenorhabditis elegans.